Here is a 160-residue protein sequence, read N- to C-terminus: Putative pre-16S rRNA nuclease (160 aa).

The protein belongs to the YqgF nuclease family.

Its subcellular location is the cytoplasm. Could be a nuclease involved in processing of the 5'-end of pre-16S rRNA. In Rhodopseudomonas palustris (strain BisB5), this protein is Putative pre-16S rRNA nuclease.